The sequence spans 431 residues: UDP-N-acetylglucosamine 1-carboxyvinyltransferase (431 aa).

Position 22–23 (22–23) interacts with phosphoenolpyruvate; it reads KN. Arginine 102 contacts UDP-N-acetyl-alpha-D-glucosamine. Catalysis depends on cysteine 126, which acts as the Proton donor. Position 126 is a 2-(S-cysteinyl)pyruvic acid O-phosphothioketal (cysteine 126). Residues 131–135, aspartate 316, and isoleucine 338 each bind UDP-N-acetyl-alpha-D-glucosamine; that span reads RPVDL.

This sequence belongs to the EPSP synthase family. MurA subfamily.

The protein resides in the cytoplasm. It carries out the reaction phosphoenolpyruvate + UDP-N-acetyl-alpha-D-glucosamine = UDP-N-acetyl-3-O-(1-carboxyvinyl)-alpha-D-glucosamine + phosphate. Its pathway is cell wall biogenesis; peptidoglycan biosynthesis. Functionally, cell wall formation. Adds enolpyruvyl to UDP-N-acetylglucosamine. This is UDP-N-acetylglucosamine 1-carboxyvinyltransferase from Beijerinckia indica subsp. indica (strain ATCC 9039 / DSM 1715 / NCIMB 8712).